Reading from the N-terminus, the 120-residue chain is NAD(P)H-quinone oxidoreductase subunit 3, chloroplastic (120 aa).

3 helical membrane-spanning segments follow: residues 9 to 29 (IFWA…LISG), 64 to 84 (MFAL…PWAM), and 88 to 108 (VLGV…IVGS).

This sequence belongs to the complex I subunit 3 family. As to quaternary structure, NDH is composed of at least 16 different subunits, 5 of which are encoded in the nucleus.

The protein localises to the plastid. The protein resides in the chloroplast thylakoid membrane. It carries out the reaction a plastoquinone + NADH + (n+1) H(+)(in) = a plastoquinol + NAD(+) + n H(+)(out). The enzyme catalyses a plastoquinone + NADPH + (n+1) H(+)(in) = a plastoquinol + NADP(+) + n H(+)(out). NDH shuttles electrons from NAD(P)H:plastoquinone, via FMN and iron-sulfur (Fe-S) centers, to quinones in the photosynthetic chain and possibly in a chloroplast respiratory chain. The immediate electron acceptor for the enzyme in this species is believed to be plastoquinone. Couples the redox reaction to proton translocation, and thus conserves the redox energy in a proton gradient. The chain is NAD(P)H-quinone oxidoreductase subunit 3, chloroplastic from Carica papaya (Papaya).